A 431-amino-acid chain; its full sequence is Adenylosuccinate synthetase (431 aa).

GTP-binding positions include 13–19 (GDEGKGK) and 41–43 (GHT). The Proton acceptor role is filled by Asp14. Residues Asp14 and Gly41 each coordinate Mg(2+). IMP-binding positions include 14-17 (DEGK), 39-42 (NAGH), Thr130, Arg144, Gln225, Thr240, and Arg304. His42 serves as the catalytic Proton donor. Position 300-306 (300-306 (ATTGRKR)) interacts with substrate. GTP is bound by residues Arg306, 332-334 (KLD), and 415-417 (STG).

It belongs to the adenylosuccinate synthetase family. Homodimer. Requires Mg(2+) as cofactor.

It is found in the cytoplasm. The catalysed reaction is IMP + L-aspartate + GTP = N(6)-(1,2-dicarboxyethyl)-AMP + GDP + phosphate + 2 H(+). The protein operates within purine metabolism; AMP biosynthesis via de novo pathway; AMP from IMP: step 1/2. In terms of biological role, plays an important role in the de novo pathway of purine nucleotide biosynthesis. Catalyzes the first committed step in the biosynthesis of AMP from IMP. The sequence is that of Adenylosuccinate synthetase from Shewanella loihica (strain ATCC BAA-1088 / PV-4).